Reading from the N-terminus, the 226-residue chain is PKHD-type hydroxylase mma_3618 (226 aa).

In terms of domain architecture, Fe2OG dioxygenase spans 78–178 (RYMPPLFNRY…RISSFFWVQS (101 aa)). Residues His96, Asp98, and His159 each coordinate Fe cation. A 2-oxoglutarate-binding site is contributed by Arg169.

Requires Fe(2+) as cofactor. L-ascorbate is required as a cofactor.

This is PKHD-type hydroxylase mma_3618 from Janthinobacterium sp. (strain Marseille) (Minibacterium massiliensis).